We begin with the raw amino-acid sequence, 158 residues long: Ribonuclease H (158 aa).

One can recognise an RNase H type-1 domain in the interval 3 to 144 (ELKLIHIFTD…CDQLARAAAE (142 aa)). Mg(2+) is bound by residues D12, E50, D72, and D136.

It belongs to the RNase H family. In terms of assembly, monomer. The cofactor is Mg(2+).

The protein localises to the cytoplasm. It catalyses the reaction Endonucleolytic cleavage to 5'-phosphomonoester.. Endonuclease that specifically degrades the RNA of RNA-DNA hybrids. The polypeptide is Ribonuclease H (Shewanella sp. (strain MR-4)).